The sequence spans 253 residues: Uracil-DNA glycosylase (253 aa).

Catalysis depends on aspartate 79, which acts as the Proton acceptor.

The protein belongs to the uracil-DNA glycosylase (UDG) superfamily. UNG family.

The protein localises to the cytoplasm. It catalyses the reaction Hydrolyzes single-stranded DNA or mismatched double-stranded DNA and polynucleotides, releasing free uracil.. In terms of biological role, excises uracil residues from the DNA which can arise as a result of misincorporation of dUMP residues by DNA polymerase or due to deamination of cytosine. The polypeptide is Uracil-DNA glycosylase (Xylella fastidiosa (strain M23)).